Reading from the N-terminus, the 65-residue chain is Small ribosomal subunit protein bS21 (65 aa).

It belongs to the bacterial ribosomal protein bS21 family.

The polypeptide is Small ribosomal subunit protein bS21 (Geobacter sp. (strain M21)).